The following is a 491-amino-acid chain: Glucose-6-phosphate 1-dehydrogenase (491 aa).

Positions 51 and 150 each coordinate NADP(+). Positions 180, 184, 218, and 237 each coordinate substrate. The active-site Proton acceptor is the histidine 242. A substrate-binding site is contributed by lysine 341.

This sequence belongs to the glucose-6-phosphate dehydrogenase family.

The catalysed reaction is D-glucose 6-phosphate + NADP(+) = 6-phospho-D-glucono-1,5-lactone + NADPH + H(+). It participates in carbohydrate degradation; pentose phosphate pathway; D-ribulose 5-phosphate from D-glucose 6-phosphate (oxidative stage): step 1/3. Its function is as follows. Catalyzes the oxidation of glucose 6-phosphate to 6-phosphogluconolactone. The chain is Glucose-6-phosphate 1-dehydrogenase from Rhizobium meliloti (strain 1021) (Ensifer meliloti).